The sequence spans 106 residues: uncharacterized protein (106 aa).

This sequence belongs to the SUI1 family.

This is an uncharacterized protein from Haemophilus influenzae (strain ATCC 51907 / DSM 11121 / KW20 / Rd).